The chain runs to 750 residues: Protein psiO (750 aa).

The N-terminal stretch at 1–22 is a signal peptide; that stretch reads MKEKIKLSLLILTSIILAVANS. Residues 23–688 lie on the Extracellular side of the membrane; it reads QTQPKTLAMT…GCNTAAVVST (666 aa). N-linked (GlcNAc...) asparagine glycosylation occurs at N129. Residues 140–286 form the PA14 domain; that stretch reads QEYFPINGKG…DDYCGVCNGD (147 aa). 5 N-linked (GlcNAc...) asparagine glycosylation sites follow: N447, N506, N554, N571, and N659. Residues 689-709 traverse the membrane as a helical segment; that stretch reads AVIAGVTVAAVVGLGIFLYGG. Residues 710–750 lie on the Cytoplasmic side of the membrane; sequence KKGYDYYQDNKSKGMTGANSNPLYKESGNAGQNPLYNDNNL. The segment at 727–750 is disordered; it reads ANSNPLYKESGNAGQNPLYNDNNL. A compositionally biased stretch (polar residues) spans 738-750; it reads NAGQNPLYNDNNL.

It belongs to the prespore-cell-inducing factor family.

It is found in the membrane. The sequence is that of Protein psiO (psiO) from Dictyostelium discoideum (Social amoeba).